Here is a 364-residue protein sequence, read N- to C-terminus: Dihydroorotate dehydrogenase (quinone) (364 aa).

Residues 62 to 66 (AGFDK) and threonine 86 each bind FMN. Lysine 66 contributes to the substrate binding site. Residue 111–115 (NRMGF) participates in substrate binding. Asparagine 142 and asparagine 175 together coordinate FMN. Asparagine 175 is a binding site for substrate. Catalysis depends on serine 178, which acts as the Nucleophile. Asparagine 180 contacts substrate. Residues lysine 216 and threonine 244 each contribute to the FMN site. 245 to 246 (NT) contacts substrate. FMN-binding positions include glycine 267, glycine 296, and 317 to 318 (YT).

Belongs to the dihydroorotate dehydrogenase family. Type 2 subfamily. In terms of assembly, monomer. The cofactor is FMN.

The protein resides in the cell membrane. It carries out the reaction (S)-dihydroorotate + a quinone = orotate + a quinol. The protein operates within pyrimidine metabolism; UMP biosynthesis via de novo pathway; orotate from (S)-dihydroorotate (quinone route): step 1/1. Its function is as follows. Catalyzes the conversion of dihydroorotate to orotate with quinone as electron acceptor. This chain is Dihydroorotate dehydrogenase (quinone), found in Anaeromyxobacter sp. (strain K).